The following is a 176-amino-acid chain: Ribosome rescue factor SmrB (176 aa).

Residues 29–51 (TIIQQPKKNTKQKEIKRSNREAS) form a disordered region. Basic and acidic residues predominate over residues 39-51 (KQKEIKRSNREAS). One can recognise a Smr domain in the interval 97–172 (LDMHGMTQQE…GDGALLVLLS (76 aa)).

The protein belongs to the SmrB family. Associates with collided ribosomes, but not with correctly translating polysomes.

Its function is as follows. Acts as a ribosome collision sensor. Detects stalled/collided disomes (pairs of ribosomes where the leading ribosome is stalled and a second ribosome has collided with it) and endonucleolytically cleaves mRNA at the 5' boundary of the stalled ribosome. Stalled/collided disomes form a new interface (primarily via the 30S subunits) that binds SmrB. Cleaved mRNA becomes available for tmRNA ligation, leading to ribosomal subunit dissociation and rescue of stalled ribosomes. This is Ribosome rescue factor SmrB from Vibrio parahaemolyticus serotype O3:K6 (strain RIMD 2210633).